A 1662-amino-acid polypeptide reads, in one-letter code: Putative mediator of RNA polymerase II transcription subunit 23 (1662 aa).

Disordered regions lie at residues 1 to 24, 95 to 139, 206 to 252, and 1530 to 1572; these read MYTN…PQQQ, QQRP…QSQP, TTTP…STTN, and GYDD…QDTN. Residues 39-122 are a coiled coil; the sequence is QQQNIQQQQQ…QQSQQQQASL (84 aa). A compositionally biased stretch (low complexity) spans 95-124; sequence QQRPQTPQQNAQQQSQQSQQSQQQQASLGQ. Acidic residues predominate over residues 1532-1560; it reads DDDDDDEDDDYYDEDDEDEDDDNEDDQQD.

This sequence belongs to the Mediator complex subunit 23 family. Component of the Mediator complex.

It localises to the nucleus. Its function is as follows. Component of the Mediator complex, a coactivator involved in the regulated transcription of nearly all RNA polymerase II-dependent genes. Mediator functions as a bridge to convey information from gene-specific regulatory proteins to the basal RNA polymerase II transcription machinery. Mediator is recruited to promoters by direct interactions with regulatory proteins and serves as a scaffold for the assembly of a functional preinitiation complex with RNA polymerase II and the general transcription factors. This is Putative mediator of RNA polymerase II transcription subunit 23 (med23) from Dictyostelium discoideum (Social amoeba).